A 338-amino-acid polypeptide reads, in one-letter code: Solute-binding protein Rfer_1840 (338 aa).

A signal peptide spans 1–25 (MQRRQLLQSMGGLAASTMPFSLAFA). Malonate is bound by residues Arg-47, Tyr-100, Arg-175, Ser-197, 214-218 (TSSTS), and Glu-244.

The protein belongs to the bacterial solute-binding protein 7 family. The complex is comprised of an extracytoplasmic solute-binding protein and a heteromeric permease formed by two transmembrane proteins.

It is found in the periplasm. Functionally, solute-binding protein that binds malonate (in vitro). Probably part of a tripartite ATP-independent periplasmic (TRAP) transport system that mediates solute transport into the cytoplasm. This is Solute-binding protein Rfer_1840 from Albidiferax ferrireducens (strain ATCC BAA-621 / DSM 15236 / T118) (Rhodoferax ferrireducens).